Consider the following 430-residue polypeptide: Dihydrolipoyllysine-residue acetyltransferase component of pyruvate dehydrogenase complex (430 aa).

A Lipoyl-binding domain is found at 2–77 (AFEFRLPDIG…VVGDVIVKID (76 aa)). At Lys-43 the chain carries N6-lipoyllysine. Positions 80–122 (DAEDMQFKGHDDDSSSKEEPAKEEAPAEQAPVATQTEEVDENR) are disordered. A compositionally biased stretch (basic and acidic residues) spans 84-104 (MQFKGHDDDSSSKEEPAKEEA). Positions 125–162 (KAMPSVRKYAREKGVNIKAVSGSGKNGRITKEDVDAYL) constitute a Peripheral subunit-binding (PSBD) domain. Residues 165–200 (GAPTASNESAASATSEEVAETPAAPAAVTLEGDFPE) form a disordered region. Residues 166-193 (APTASNESAASATSEEVAETPAAPAAVT) are compositionally biased toward low complexity. His-401 is a catalytic residue.

The protein belongs to the 2-oxoacid dehydrogenase family. As to quaternary structure, forms a 24-polypeptide structural core with octahedral symmetry. (R)-lipoate serves as cofactor.

The enzyme catalyses N(6)-[(R)-dihydrolipoyl]-L-lysyl-[protein] + acetyl-CoA = N(6)-[(R)-S(8)-acetyldihydrolipoyl]-L-lysyl-[protein] + CoA. Its function is as follows. The pyruvate dehydrogenase complex catalyzes the overall conversion of pyruvate to acetyl-CoA and CO(2). It contains multiple copies of three enzymatic components: pyruvate dehydrogenase (E1), dihydrolipoamide acetyltransferase (E2) and lipoamide dehydrogenase (E3). The sequence is that of Dihydrolipoyllysine-residue acetyltransferase component of pyruvate dehydrogenase complex (pdhC) from Staphylococcus aureus (strain COL).